A 902-amino-acid polypeptide reads, in one-letter code: Leucine-rich repeat-containing G-protein coupled receptor 5 (902 aa).

The first 22 residues, methionine 1–alanine 22, serve as a signal peptide directing secretion. Residues alanine 23–threonine 558 are Extracellular-facing. Disulfide bonds link cysteine 32/cysteine 38 and cysteine 36/cysteine 49. In terms of domain architecture, LRRNT spans cysteine 32–leucine 61. 17 LRR repeats span residues glutamate 41–leucine 61, serine 62–asparagine 85, leucine 86–glycine 109, glycine 111–asparagine 133, leucine 134–glycine 157, phenylalanine 159–serine 181, leucine 182–asparagine 205, serine 207–glycine 229, leucine 230–leucine 253, lysine 254–glycine 276, proline 278–histidine 300, proline 302–threonine 324, threonine 325–glutamine 347, leucine 348–arginine 372, glutamine 374–glutamine 393, leucine 394–serine 417, and leucine 418–glycine 441. 2 N-linked (GlcNAc...) asparagine glycosylation sites follow: asparagine 60 and asparagine 74. Asparagine 205 carries an N-linked (GlcNAc...) asparagine glycan. Cysteine 345 and cysteine 370 form a disulfide bridge. A disulfide bond links cysteine 476 and cysteine 537. A glycan (N-linked (GlcNAc...) asparagine) is linked at asparagine 496. Residues glycine 559–phenylalanine 579 traverse the membrane as a helical segment. Topologically, residues arginine 580–lysine 589 are cytoplasmic. The helical transmembrane segment at leucine 590 to alanine 610 threads the bilayer. Residues methionine 598–asparagine 619 form an LRR 18 repeat. Topologically, residues threonine 611–glutamine 634 are extracellular. Cysteine 633 and cysteine 708 are oxidised to a cystine. A helical membrane pass occupies residues isoleucine 635 to alanine 655. Over leucine 656–lysine 678 the chain is Cytoplasmic. A helical transmembrane segment spans residues leucine 679–glycine 699. Over serine 700 to serine 718 the chain is Extracellular. Residues methionine 719 to alanine 739 traverse the membrane as a helical segment. Residues tyrosine 740–histidine 763 lie on the Cytoplasmic side of the membrane. Residues isoleucine 764 to serine 784 form a helical membrane-spanning segment. Residues serine 785–lysine 798 are Extracellular-facing. N-linked (GlcNAc...) asparagine glycans are attached at residues asparagine 788 and asparagine 797. A helical transmembrane segment spans residues serine 799–phenylalanine 819. The Cytoplasmic segment spans residues asparagine 820–histidine 902.

This sequence belongs to the G-protein coupled receptor 1 family.

It localises to the cell membrane. It is found in the golgi apparatus. The protein resides in the trans-Golgi network membrane. In terms of biological role, receptor for R-spondins that potentiates the canonical Wnt signaling pathway and acts as a stem cell marker of the intestinal epithelium and the hair follicle. Upon binding to R-spondins (RSPO1, RSPO2, RSPO3 or RSPO4), associates with phosphorylated LRP6 and frizzled receptors that are activated by extracellular Wnt receptors, triggering the canonical Wnt signaling pathway to increase expression of target genes. In contrast to classical G-protein coupled receptors, does not activate heterotrimeric G-proteins to transduce the signal. Involved in the development and/or maintenance of the adult intestinal stem cells during postembryonic development. This is Leucine-rich repeat-containing G-protein coupled receptor 5 (lgr5) from Xenopus tropicalis (Western clawed frog).